We begin with the raw amino-acid sequence, 81 residues long: Small ribosomal subunit protein bS16 (81 aa).

Belongs to the bacterial ribosomal protein bS16 family.

This is Small ribosomal subunit protein bS16 from Clostridium perfringens (strain ATCC 13124 / DSM 756 / JCM 1290 / NCIMB 6125 / NCTC 8237 / Type A).